The primary structure comprises 200 residues: Large ribosomal subunit protein uL4 (200 aa).

Positions 42-65 are disordered; the sequence is TRAQKTRSEVSGGGAKPWRQKGTG.

This sequence belongs to the universal ribosomal protein uL4 family. As to quaternary structure, part of the 50S ribosomal subunit.

In terms of biological role, one of the primary rRNA binding proteins, this protein initially binds near the 5'-end of the 23S rRNA. It is important during the early stages of 50S assembly. It makes multiple contacts with different domains of the 23S rRNA in the assembled 50S subunit and ribosome. Forms part of the polypeptide exit tunnel. This Vibrio vulnificus (strain CMCP6) protein is Large ribosomal subunit protein uL4.